The following is a 263-amino-acid chain: Undecaprenyl-diphosphatase 2 (263 aa).

The next 8 helical transmembrane spans lie at 17-37, 42-62, 83-103, 106-126, 142-162, 183-203, 216-236, and 242-262; these read TEFL…LIGF, AKVF…VIFW, LHII…HSAI, VLFG…LMIV, ITYK…WPGF, AEYT…LDLI, LFAT…VSFL, and VKLT…YFFI.

Belongs to the UppP family.

Its subcellular location is the cell membrane. The catalysed reaction is di-trans,octa-cis-undecaprenyl diphosphate + H2O = di-trans,octa-cis-undecaprenyl phosphate + phosphate + H(+). In terms of biological role, catalyzes the dephosphorylation of undecaprenyl diphosphate (UPP). Confers resistance to bacitracin. The protein is Undecaprenyl-diphosphatase 2 of Bacillus anthracis.